Consider the following 433-residue polypeptide: Xylose isomerase (433 aa).

Active-site residues include histidine 99 and aspartate 102. The Mg(2+) site is built by glutamate 230, glutamate 266, histidine 269, aspartate 294, aspartate 305, aspartate 307, and aspartate 337.

It belongs to the xylose isomerase family. In terms of assembly, homotetramer. It depends on Mg(2+) as a cofactor.

It localises to the cytoplasm. It carries out the reaction alpha-D-xylose = alpha-D-xylulofuranose. The polypeptide is Xylose isomerase (Cereibacter sphaeroides (strain ATCC 17023 / DSM 158 / JCM 6121 / CCUG 31486 / LMG 2827 / NBRC 12203 / NCIMB 8253 / ATH 2.4.1.) (Rhodobacter sphaeroides)).